Here is a 189-residue protein sequence, read N- to C-terminus: MAFSNALVLCFLLAIINMALPSLATVYTVGDTSGWVIGGDYSTWASDKTFAVGDSLVFNYGAGAHTVDEVKESDYKSCTSGNSISTDSTGATTIPLKKAGKHYFICGVPGHSTGGMKLSIKVKASSGSSAAPSATPSSSGKGSPSSDDTPAATTTTTTPTKQNESSATSLSPIVALFFTVSWICSYVLV.

An N-terminal signal peptide occupies residues 1 to 24 (MAFSNALVLCFLLAIINMALPSLA). The 100-residue stretch at 25–124 (TVYTVGDTSG…GMKLSIKVKA (100 aa)) folds into the Phytocyanin domain. Cu cation is bound by residues histidine 65, cysteine 106, and histidine 111. Residues cysteine 78 and cysteine 106 are joined by a disulfide bond. The segment covering 127–160 (GSSAAPSATPSSSGKGSPSSDDTPAATTTTTTPT) has biased composition (low complexity). The segment at 127 to 165 (GSSAAPSATPSSSGKGSPSSDDTPAATTTTTTPTKQNES) is disordered. Residue asparagine 163 is glycosylated (N-linked (GlcNAc...) asparagine).

In Pisum sativum (Garden pea), this protein is Blue copper protein.